A 342-amino-acid chain; its full sequence is Flotillin-like protein FloA (342 aa).

The next 2 helical transmembrane spans lie at 18 to 38 and 39 to 59; these read FFIF…GKFI and SLWF…IIGM.

It belongs to the flotillin-like FloA family. In terms of assembly, homooligomerizes.

The protein resides in the cell membrane. Its subcellular location is the membrane raft. Found in functional membrane microdomains (FMM) that may be equivalent to eukaryotic membrane rafts. FMMs are highly dynamic and increase in number as cells age. Flotillins are thought to be important factors in membrane fluidity. The sequence is that of Flotillin-like protein FloA from Protochlamydia amoebophila (strain UWE25).